Consider the following 193-residue polypeptide: Coiled-coil domain-containing protein 184 (193 aa).

Positions 39-68 form a coiled coil; that stretch reads GMKELMEHLKAQLQALFEDVRAMRGALDEQ. The disordered stretch occupies residues 101 to 176; that stretch reads GLGVAGGKGS…LGENGPLVEP (76 aa). Acidic residues predominate over residues 135 to 146; the sequence is PDEEDEEEEEEK.

The sequence is that of Coiled-coil domain-containing protein 184 (Ccdc184) from Rattus norvegicus (Rat).